A 1028-amino-acid chain; its full sequence is MRAARALLPLLLQACWTAAQDEPETPRAVAFQDCPVDLFFVLDTSESVALRLKPYGALVDKVKSFTKRFIDNLRDRYYRCDRNLVWNAGALHYSDEVEIIQGLTRMPGGRDALKSSVDAVKYFGKGTYTDCAIKKGLEQLLVGGSHLKENKYLIVVTDGHPLEGYKEPCGGLEDAVNEAKHLGVKVFSVAITPDHLEPRLSIIATDHTYRRNFTAADWGQSRDAEEAISQTIDTIVDMIKNNVEQVCCSFECQPARGPPGLRGDPGFEGERGKPGLPGEKGEAGDPGRPGDLGPVGYQGMKGEKGSRGEKGSRGPKGYKGEKGKRGIDGVDGVKGEMGYPGLPGCKGSPGFDGIQGPPGPKGDPGAFGLKGEKGEPGADGEAGRPGSSGPSGDEGQPGEPGPPGEKGEAGDEGNPGPDGAPGERGGPGERGPRGTPGTRGPRGDPGEAGPQGDQGREGPVGVPGDPGEAGPIGPKGYRGDEGPPGSEGARGAPGPAGPPGDPGLMGERGEDGPAGNGTEGFPGFPGYPGNRGAPGINGTKGYPGLKGDEGEAGDPGDDNNDIAPRGVKGAKGYRGPEGPQGPPGHQGPPGPDECEILDIIMKMCSCCECKCGPIDLLFVLDSSESIGLQNFEIAKDFVVKVIDRLSRDELVKFEPGQSYAGVVQYSHSQMQEHVSLRSPSIRNVQELKEAIKSLQWMAGGTFTGEALQYTRDQLLPPSPNNRIALVITDGRSDTQRDTTPLNVLCSPGIQVVSVGIKDVFDFIPGSDQLNVISCQGLAPSQGRPGLSLVKENYAELLEDAFLKNVTAQICIDKKCPDYTCPITFSSPADITILLDGSASVGSHNFDTTKRFAKRLAERFLTAGRTDPAHDVRVAVVQYSGTGQQRPERASLQFLQNYTALASAVDAMDFINDATDVNDALGYVTRFYREASSGAAKKRLLLFSDGNSQGATPAAIEKAVQEAQRAGIEIFVVVVGRQVNEPHIRVLVTGKTAEYDVAYGESHLFRVPSYQALLRGVFHQTVSRKVALG.

The signal sequence occupies residues 1–19 (MRAARALLPLLLQACWTAA). Residues 20–256 (QDEPETPRAV…CCSFECQPAR (237 aa)) are N-terminal globular domain. The 199-residue stretch at 37–235 (DLFFVLDTSE…EAISQTIDTI (199 aa)) folds into the VWFA 1 domain. The N-linked (GlcNAc...) asparagine glycan is linked to asparagine 212. Positions 254 to 590 (PARGPPGLRG…GPPGHQGPPG (337 aa)) are disordered. The segment at 257 to 592 (GPPGLRGDPG…PGHQGPPGPD (336 aa)) is triple-helical region. Positions 262-264 (RGD) match the Cell attachment site motif. 2 stretches are compositionally biased toward basic and acidic residues: residues 268–285 (EGERGKPGLPGEKGEAGD) and 301–334 (KGEKGSRGEKGSRGPKGYKGEKGKRGIDGVDGVK). Residues 384–394 (RPGSSGPSGDE) show a composition bias toward low complexity. The short motif at 442-444 (RGD) is the Cell attachment site element. Over residues 457–471 (EGPVGVPGDPGEAGP) the composition is skewed to low complexity. A Cell attachment site motif is present at residues 478–480 (RGD). Low complexity predominate over residues 483 to 493 (PPGSEGARGAP). Asparagine 516 and asparagine 537 each carry an N-linked (GlcNAc...) asparagine glycan. A compositionally biased stretch (acidic residues) spans 550-560 (GEAGDPGDDNN). Over residues 579–590 (PQGPPGHQGPPG) the composition is skewed to pro residues. Residues 593–1028 (ECEILDIIMK…QTVSRKVALG (436 aa)) are C-terminal globular domain. VWFA domains lie at 615–805 (DLLF…LKNV) and 829–1021 (DITI…HQTV). Residues asparagine 804 and asparagine 896 are each glycosylated (N-linked (GlcNAc...) asparagine).

It belongs to the type VI collagen family. Trimers composed of three different chains: alpha-1(VI), alpha-2(VI), and alpha-3(VI) or alpha-5(VI) or alpha-6(VI). Post-translationally, prolines at the third position of the tripeptide repeating unit (G-X-Y) are hydroxylated in some or all of the chains.

It localises to the secreted. It is found in the extracellular space. The protein resides in the extracellular matrix. Collagen VI acts as a cell-binding protein. In Homo sapiens (Human), this protein is Collagen alpha-1(VI) chain (COL6A1).